Reading from the N-terminus, the 832-residue chain is Subtilisin-like protease SBT2.1 (832 aa).

The N-terminal stretch at 1–24 (MDESSLVRFVFLLCLVSSSVFCLA) is a signal peptide. A propeptide spans 25 to 138 (ESDQNATVSS…VVLDFLVEKA (114 aa)) (activation peptide). Residues asparagine 29 and asparagine 73 are each glycosylated (N-linked (GlcNAc...) asparagine). An Inhibitor I9 domain is found at 36 to 136 (VYIVTLKDRP…ENVVLDFLVE (101 aa)). The 540-residue stretch at 145–684 (FLGLPRGAWL…SGFVNATAAL (540 aa)) folds into the Peptidase S8 domain. The active-site Charge relay system is aspartate 172. The N-linked (GlcNAc...) asparagine glycan is linked to asparagine 233. The active-site Charge relay system is histidine 247. Residues asparagine 272, asparagine 315, asparagine 390, asparagine 417, asparagine 470, asparagine 515, and asparagine 522 are each glycosylated (N-linked (GlcNAc...) asparagine). One can recognise a PA domain in the interval 408-503 (LVLATHALRN…MDIPGILISS (96 aa)). Catalysis depends on serine 609, which acts as the Charge relay system. Residues asparagine 679, asparagine 705, asparagine 713, asparagine 723, asparagine 760, and asparagine 801 are each glycosylated (N-linked (GlcNAc...) asparagine).

The protein belongs to the peptidase S8 family.

It is found in the secreted. The sequence is that of Subtilisin-like protease SBT2.1 from Arabidopsis thaliana (Mouse-ear cress).